The sequence spans 709 residues: Polyribonucleotide nucleotidyltransferase (709 aa).

The Mg(2+) site is built by D487 and D493. The 60-residue stretch at 554–613 folds into the KH domain; that stretch reads PRIHTMKISSDKIKDVIGKGGAVIRALCEETGTTIEIEDDGTIKIAATEGAAAKEAIRRI. Residues 623 to 691 form the S1 motif domain; it reads GKIYPGKVMR…RQGRIRLSIK (69 aa).

This sequence belongs to the polyribonucleotide nucleotidyltransferase family. As to quaternary structure, component of the RNA degradosome, which is a multiprotein complex involved in RNA processing and mRNA degradation. Mg(2+) is required as a cofactor.

Its subcellular location is the cytoplasm. It carries out the reaction RNA(n+1) + phosphate = RNA(n) + a ribonucleoside 5'-diphosphate. Its function is as follows. Involved in mRNA degradation. Catalyzes the phosphorolysis of single-stranded polyribonucleotides processively in the 3'- to 5'-direction. The sequence is that of Polyribonucleotide nucleotidyltransferase from Aliivibrio salmonicida (strain LFI1238) (Vibrio salmonicida (strain LFI1238)).